The following is a 95-amino-acid chain: Co-chaperonin GroES (95 aa).

The protein belongs to the GroES chaperonin family. As to quaternary structure, heptamer of 7 subunits arranged in a ring. Interacts with the chaperonin GroEL.

The protein localises to the cytoplasm. In terms of biological role, together with the chaperonin GroEL, plays an essential role in assisting protein folding. The GroEL-GroES system forms a nano-cage that allows encapsulation of the non-native substrate proteins and provides a physical environment optimized to promote and accelerate protein folding. GroES binds to the apical surface of the GroEL ring, thereby capping the opening of the GroEL channel. The sequence is that of Co-chaperonin GroES from Stenotrophomonas maltophilia (strain R551-3).